Consider the following 66-residue polypeptide: Large ribosomal subunit protein bL35 (66 aa).

Positions 1 to 26 (MPKMKTHRGSAKRFKKTGSGKLKRSH) are enriched in basic residues. The interval 1-48 (MPKMKTHRGSAKRFKKTGSGKLKRSHAYTSHLFANKSQKQKRKLRKSA) is disordered.

It belongs to the bacterial ribosomal protein bL35 family. As to quaternary structure, part of the 50S ribosomal subunit.

This is Large ribosomal subunit protein bL35 from Bacillus subtilis (strain 168).